The primary structure comprises 33 residues: Glucagon-2 (33 aa).

It belongs to the glucagon family.

Its subcellular location is the secreted. Functionally, promotes hydrolysis of glycogen and lipids, and raises the blood sugar level. This Oreochromis niloticus (Nile tilapia) protein is Glucagon-2 (gcg2).